The following is a 47-amino-acid chain: Protein YpaB (47 aa).

The sequence is that of Protein YpaB (ypaB) from Escherichia coli (strain K12).